Reading from the N-terminus, the 57-residue chain is UPF0391 membrane protein RPB_2510 (57 aa).

A run of 2 helical transmembrane segments spans residues 6 to 26 and 35 to 55; these read WALI…TGIS and ILFY…FTIF.

The protein belongs to the UPF0391 family.

It is found in the cell membrane. This Rhodopseudomonas palustris (strain HaA2) protein is UPF0391 membrane protein RPB_2510.